The sequence spans 499 residues: MTTFYLSLIISLFFLIITLKVFFNTSRKFKNLPPGPQCLPIIGNLHQLKQPLHHTFHTLSQKYGQIFSLWFGSRLVVVVSSLTIAQECFTKNDIVLANRPHFLTGKYIGYNNTTVAQSPYGDHWRNLRRILSIEILSSHRLNSFLEIRRDEIMRLIQKLAQKSYNGFTEVELRPMFSEMTFNTIMRMVSGKRYYGNDCDVSDVEEARLFRGIIKEVVSLGGANNVGDFLGFLRWFDFDGLEKRLKKISKRTDAFLQGLIDEHRFGKRNSNTMIDHLLTQQQSQPEYYTDQIIKGLMVVMLLAGTDTSSVTIEWAMSNLLNHPEIMKKAKNELDTHIGHDRQVDEHDISKLPYLQSIVYETLRLHAAAPLLVPHLSSEDFSLGGYNIPQNTILMVNAWVIHRDPNLWSDPTCFKPERFEKEGEVNKLLSFGLGRRACPGENLSQRTEGLTLGLLIQCFEWKRIGEEKIDMVEAKGITAGKKTSLNAMCKVRHPLKINDVF.

A helical membrane pass occupies residues 3-23; the sequence is TFYLSLIISLFFLIITLKVFF. Cys436 serves as a coordination point for heme.

It belongs to the cytochrome P450 family. Heme serves as cofactor.

The protein localises to the membrane. In terms of biological role, probable monooxygenases exhibiting no activity with isoflavones such as formononetin, biochanin A, pseudobaptigenin, daidzein, genistein, isoformononetin and prunetin, or with flavonoids including naringenin, liquiritigenin, apigenin, luteolin, or kaempferol. In Medicago truncatula (Barrel medic), this protein is Cytochrome P450 81E8.